The primary structure comprises 493 residues: Glutamyl-tRNA(Gln) amidotransferase subunit A (493 aa).

Residues Lys78 and Ser158 each act as charge relay system in the active site. The active-site Acyl-ester intermediate is Ser182.

This sequence belongs to the amidase family. GatA subfamily. In terms of assembly, heterotrimer of A, B and C subunits.

The enzyme catalyses L-glutamyl-tRNA(Gln) + L-glutamine + ATP + H2O = L-glutaminyl-tRNA(Gln) + L-glutamate + ADP + phosphate + H(+). Functionally, allows the formation of correctly charged Gln-tRNA(Gln) through the transamidation of misacylated Glu-tRNA(Gln) in organisms which lack glutaminyl-tRNA synthetase. The reaction takes place in the presence of glutamine and ATP through an activated gamma-phospho-Glu-tRNA(Gln). The sequence is that of Glutamyl-tRNA(Gln) amidotransferase subunit A from Rickettsia typhi (strain ATCC VR-144 / Wilmington).